The chain runs to 855 residues: Cell surface glycoprotein (855 aa).

Positions 1–22 (MTANKQVRAVLLAALMVFSVFA) are cleaved as a signal peptide. Asn-78, Asn-83, Asn-108, Asn-167, Asn-174, Asn-187, Asn-203, Asn-227, Asn-230, Asn-313, Asn-363, Asn-441, Asn-548, Asn-588, Asn-608, Asn-620, Asn-642, Asn-656, and Asn-754 each carry an N-linked (GlcNAc...) asparagine glycan. The span at 782–802 (ETTTAAETTTTEESTETTTTE) shows a compositional bias: low complexity. The disordered stretch occupies residues 782–831 (ETTTAAETTTTEESTETTTTEESTEEPTETATATEEPTEEATEETTESST). Residues 817–827 (EPTEEATEETT) show a composition bias toward acidic residues. Residues 831–851 (TPGFGVVVALVALVAAALLAV) traverse the membrane as a helical segment. The short motif at 832–834 (PGF) is the PGF sorting signal element.

Belongs to the halobacterial S-layer protein family. Glycosylated. Post-translationally, cleaved by the archaeosortase ArtA at the C-terminus, with removal of a short hydrophobic segment. In terms of processing, lipidation.

Its subcellular location is the secreted. It is found in the cell wall. The protein localises to the S-layer. It localises to the cell membrane. Functionally, S-layer protein. The S-layer is a paracrystalline mono-layered assembly of proteins which coats the surface of the cell. This is Cell surface glycoprotein from Haloferax gibbonsii.